We begin with the raw amino-acid sequence, 554 residues long: Pigment biosynthesis transcriptional activator pigB (554 aa).

A disordered region spans residues 1 to 21; it reads MFTSSSPEQRKPRQSRQLPGA. The segment at residues 23–40 is a DNA-binding region (zn(2)-C6 fungal-type); that stretch reads CEECRRKKLRCDRQQPQC.

It is found in the nucleus. Transcription factor; part of the gene cluster that mediates the biosynthesis of azaphilone pigments (MonAzPs), a complex mixture of compounds with a common azaphilone skeleton very widely used as food colorants. Positively regulates the expression of the azaphilone pigments (MonAzPs) gene cluster. This is Pigment biosynthesis transcriptional activator pigB from Monascus ruber (Mold).